The following is an 84-amino-acid chain: Small ribosomal subunit protein uS15 (84 aa).

The protein belongs to the universal ribosomal protein uS15 family. In terms of assembly, part of the 30S ribosomal subunit. Forms a bridge to the 50S subunit in the 70S ribosome, contacting the 23S rRNA.

One of the primary rRNA binding proteins, it binds directly to 16S rRNA where it helps nucleate assembly of the platform of the 30S subunit by binding and bridging several RNA helices of the 16S rRNA. Functionally, forms an intersubunit bridge (bridge B4) with the 23S rRNA of the 50S subunit in the ribosome. This Thermosipho africanus (strain TCF52B) protein is Small ribosomal subunit protein uS15.